A 187-amino-acid polypeptide reads, in one-letter code: Elongation factor P (187 aa).

The protein belongs to the elongation factor P family.

It is found in the cytoplasm. It functions in the pathway protein biosynthesis; polypeptide chain elongation. Involved in peptide bond synthesis. Stimulates efficient translation and peptide-bond synthesis on native or reconstituted 70S ribosomes in vitro. Probably functions indirectly by altering the affinity of the ribosome for aminoacyl-tRNA, thus increasing their reactivity as acceptors for peptidyl transferase. In Rhodococcus erythropolis (strain PR4 / NBRC 100887), this protein is Elongation factor P.